The chain runs to 400 residues: N(alpha)-acyl-glutamine aminoacylase (400 aa).

This sequence belongs to the peptidase M20 family. Zn(2+) is required as a cofactor.

The enzyme catalyses an N(2)-acyl-L-glutamine + H2O = a carboxylate + L-glutamine. The catalysed reaction is N(2)-[(2E)-3-methylhex-2-enoyl]-L-glutaminate + H2O = (2E)-3-methylhex-2-enoate + L-glutamine. It carries out the reaction N(2)-(3-hydroxy-3-methylhexanoyl)-L-glutaminate + H2O = 3-hydroxy-3-methylhexanoate + L-glutamine. Its activity is regulated as follows. Partial loss of activity with the combination Mn(2+) and chelating agents. Activity is lost in presence of 0.5 mM dithiothreitol. Hydrolyzes odorless N-alpha-acyl-L-glutamine conjugates of short- and medium-chain fatty acids, releasing human axillary malodor compounds. The enzyme is highly specific for the glutamine residue but has a low specificity for the acyl part of the substrate. The two most common products are 3-methyl-2-hexenoic acid (3M2H) and 3-hydroxy-3-methyl-hexanoic acid (HMHA), which are produced from the odorless precursors N-alpha-3-methyl-2-hexenoyl-L-glutamine (3M2H-Gln) and N-alpha-3-hydroxy-3-methylhexanoyl-L-glutamine (HMHA-Gln). In addition, over 28 different carboxylic acids contributing to human body odor are released by this enzyme from odorless axilla secretions, including several aliphatic 3-hydroxy acids with 4-Me branches, 3,4-unsaturated, 4-Et-branched aliphatic acids, and a variety of degradation products of amino acids. The protein is N(alpha)-acyl-glutamine aminoacylase of Corynebacterium striatum.